The sequence spans 411 residues: MALLLNSTITVAMKQNPLVAVSFPRTTCLGSSFSPPRLLRVSCVATNPSKTSEETDKKKFRPIKEVPNQVTHTITQEKLEIFKSMENWAQENLLSYLKPVEASWQPQDFLPETNDEDRFYEQVKELRDRTKEIPDDYFVVLVGDMITEEALPTYQTTLNTLDGVKDETGGSLTPWAVWVRAWTAEENRHGDLLNKYLYLSGRVDMRHVEKTIQYLIGSGMDSKFENNPYNGFIYTSFQERATFISHGNTAKLATTYGDTTLAKICGTIAADEKRHETAYTRIVEKLFEIDPDGTVQALASMMRKRITMPAHLMHDGRDDDLFDHYAAVAQRIGVYTATDYAGILEFLLRRWEVEKLGMGLSGEGRRAQDYLCTLPQRIRRLEERANDRVKLASKSKPSVSFSWIYGREVEL.

Residues 1–44 constitute a chloroplast transit peptide; that stretch reads MALLLNSTITVAMKQNPLVAVSFPRTTCLGSSFSPPRLLRVSCV. Fe cation-binding residues include E148, E186, H189, E239, E272, and H275.

The protein belongs to the fatty acid desaturase type 2 family. In terms of assembly, homodimer. The cofactor is Fe(2+). In terms of tissue distribution, preferentially expressed in roots and flowers.

The protein localises to the plastid. The protein resides in the chloroplast. It catalyses the reaction octadecanoyl-[ACP] + 2 reduced [2Fe-2S]-[ferredoxin] + O2 + 2 H(+) = (9Z)-octadecenoyl-[ACP] + 2 oxidized [2Fe-2S]-[ferredoxin] + 2 H2O. It participates in lipid metabolism; fatty acid metabolism. Converts stearoyl-ACP to oleoyl-ACP by introduction of a cis double bond between carbons 9 and 10 of the acyl chain. Exhibits delta-9 palmitoyl-[acyl-carrier-protein] desaturase (PAD) activity. Involved in omega-7 monounsaturated fatty acid biosynthesis, especially in the endosperm oil. In Arabidopsis thaliana (Mouse-ear cress), this protein is Stearoyl-[acyl-carrier-protein] 9-desaturase 2, chloroplastic (S-ACP-DES2).